The chain runs to 295 residues: Host-inducible protein A (295 aa).

The disordered stretch occupies residues 1–20 (MHLDRSDSNGGSSRYTLDHE).

The protein belongs to the NopP family.

The protein is Host-inducible protein A of Rhizobium fredii (Sinorhizobium fredii).